We begin with the raw amino-acid sequence, 150 residues long: 16 kDa phloem protein 1 (150 aa).

Residues Met-1–Ser-108 form the C2 domain. Ca(2+)-binding residues include Asp-20, Asp-27, Asp-78, Asp-80, and Asp-86.

It depends on Ca(2+) as a cofactor. In terms of tissue distribution, sieve elements of leaves, stems, roots and flowers.

In terms of biological role, binds to both sense and antisense RNA. Interacts with mesophyll plasmodesmata to mediate its own cell-to-cell transport and potentiate RNA trafficking. This chain is 16 kDa phloem protein 1 (PP16-1), found in Cucurbita maxima (Pumpkin).